The sequence spans 130 residues: MIGEWNNGTGRRKSSVARVFLKKGSGKITVNGKDIQQYFGRETSIMIAKQPLALTNHVETFDIQINVHGGGESGQAGAARHGITRALIDYDATLKPALSQAGFVTRDAREVERKKVGLHSARRAKQFSKR.

This sequence belongs to the universal ribosomal protein uS9 family.

This chain is Small ribosomal subunit protein uS9, found in Acidovorax ebreus (strain TPSY) (Diaphorobacter sp. (strain TPSY)).